The primary structure comprises 244 residues: 5-oxoprolinase subunit A (244 aa).

This sequence belongs to the LamB/PxpA family. Forms a complex composed of PxpA, PxpB and PxpC.

It carries out the reaction 5-oxo-L-proline + ATP + 2 H2O = L-glutamate + ADP + phosphate + H(+). Catalyzes the cleavage of 5-oxoproline to form L-glutamate coupled to the hydrolysis of ATP to ADP and inorganic phosphate. The protein is 5-oxoprolinase subunit A of Salmonella typhi.